We begin with the raw amino-acid sequence, 285 residues long: Tryptophan synthase alpha chain (285 aa).

Catalysis depends on proton acceptor residues Glu-53 and Asp-64.

It belongs to the TrpA family. In terms of assembly, tetramer of two alpha and two beta chains.

It catalyses the reaction (1S,2R)-1-C-(indol-3-yl)glycerol 3-phosphate + L-serine = D-glyceraldehyde 3-phosphate + L-tryptophan + H2O. The protein operates within amino-acid biosynthesis; L-tryptophan biosynthesis; L-tryptophan from chorismate: step 5/5. Its function is as follows. The alpha subunit is responsible for the aldol cleavage of indoleglycerol phosphate to indole and glyceraldehyde 3-phosphate. This is Tryptophan synthase alpha chain from Bordetella parapertussis (strain 12822 / ATCC BAA-587 / NCTC 13253).